The following is a 555-amino-acid chain: CTP synthase (555 aa).

The segment at 1–265 (MTRYIFITGG…GNRVCEKLNI (265 aa)) is amidoligase domain. CTP is bound at residue Ser13. Ser13 contributes to the UTP binding site. Residues 14-19 (SLGKGI) and Asp71 contribute to the ATP site. Residues Asp71 and Glu139 each contribute to the Mg(2+) site. CTP contacts are provided by residues 146 to 148 (DIE), 186 to 191 (KTKPTQ), and Lys222. UTP contacts are provided by residues 186–191 (KTKPTQ) and Lys222. A Glutamine amidotransferase type-1 domain is found at 290 to 541 (TVAVVGKYVD…IKAGLAAKEA (252 aa)). Gly351 contacts L-glutamine. Residue Cys378 is the Nucleophile; for glutamine hydrolysis of the active site. L-glutamine is bound by residues 379–382 (LGMQ), Glu402, and Arg469. Residues His514 and Glu516 contribute to the active site.

It belongs to the CTP synthase family. As to quaternary structure, homotetramer.

The catalysed reaction is UTP + L-glutamine + ATP + H2O = CTP + L-glutamate + ADP + phosphate + 2 H(+). It catalyses the reaction L-glutamine + H2O = L-glutamate + NH4(+). The enzyme catalyses UTP + NH4(+) + ATP = CTP + ADP + phosphate + 2 H(+). It functions in the pathway pyrimidine metabolism; CTP biosynthesis via de novo pathway; CTP from UDP: step 2/2. Its activity is regulated as follows. Allosterically activated by GTP, when glutamine is the substrate; GTP has no effect on the reaction when ammonia is the substrate. The allosteric effector GTP functions by stabilizing the protein conformation that binds the tetrahedral intermediate(s) formed during glutamine hydrolysis. Inhibited by the product CTP, via allosteric rather than competitive inhibition. Its function is as follows. Catalyzes the ATP-dependent amination of UTP to CTP with either L-glutamine or ammonia as the source of nitrogen. Regulates intracellular CTP levels through interactions with the four ribonucleotide triphosphates. This is CTP synthase from Coxiella burnetii (strain CbuG_Q212) (Coxiella burnetii (strain Q212)).